Here is an 809-residue protein sequence, read N- to C-terminus: 3',5'-cyclic-AMP phosphodiesterase 4D (809 aa).

The segment at 1–107 (MEAEGSSAPA…SGATGRVRHR (107 aa)) is disordered. 3 positions are modified to phosphoserine: His-54, Pro-59, and Pro-63. Positions 58 to 89 (PPPPPPSPQPQPQCPLQPPPPPPLPPPPPPPG) are enriched in pro residues. Positions 90–102 (AARGRYASSGATG) are enriched in low complexity. Phosphoserine occurs at positions 142, 299, 301, 348, and 375. The segment at 343-364 (EVEIPSPTQKEKEKKKRPMSQI) is disordered. In terms of domain architecture, PDEase spans 386–715 (VKTEQEDVLA…EWYQSTIPQS (330 aa)). Lys-387 is covalently cross-linked (Glycyl lysine isopeptide (Lys-Gly) (interchain with G-Cter in SUMO)). The Proton donor role is filled by His-462. Residue His-462 coordinates 3',5'-cyclic AMP. Position 462 (His-462) interacts with AMP. 4 residues coordinate Zn(2+): His-466, His-502, Asp-503, and Asp-620. The AMP site is built by Asp-503, Asp-620, Asn-623, Gln-671, and Phe-674. Mg(2+) is bound at residue Asp-503. Asp-503 provides a ligand contact to Mn(2+). 3',5'-cyclic AMP is bound by residues Gln-671 and Phe-674. 2 disordered regions span residues 710–729 (STIP…GRQG) and 739–809 (TLEE…SPDT). Polar residues predominate over residues 762–773 (CSDSKTLCTQDS). Residues 779–796 (PLDEQVEEEAVGEEEESQ) are compositionally biased toward acidic residues.

It belongs to the cyclic nucleotide phosphodiesterase family. PDE4 subfamily. In terms of assembly, homodimer for the long isoforms. Isoforms with truncated N-termini are monomeric. Isoform 3 is part of a ternary complex containing PRKAR2A, PRKAR2B and AKAP9. Interacts with PDE4DIP. Identified in a complex composed of RYR1, PDE4D, PKA, FKBP1A and protein phosphatase 1 (PP1). Isoform 5, isoform N3 and isoform 12 bind RACK1 via their unique N-terminus. Binds ARRB2. Interacts (via N-terminal region) with SHANK2 (via proline-rich region); the interaction is increased in a PKA-dependent manner. It depends on Zn(2+) as a cofactor. The cofactor is Mg(2+). Mn(2+) serves as cofactor. Post-translationally, long isoforms that share a conserved PKA phosphorylation site in the N-terminus are activated by PKA through phosphorylation. Isoform 3 and isoform 7 are activated by phosphorylation (in vitro), but not isoform 6. Isoform N3 and isoform 12 are phosphorylated on Ser-49, Ser-51, Ser-55 and Ser-59. Sumoylation of long isoforms by PIAS4 augments their activation by PKA phosphorylation and represses their inhibition by ERK phosphorylation. In terms of tissue distribution, expressed in colonic epithelial cells (at protein level). Widespread; most abundant in skeletal muscle. Detected in brain. As to expression, detected in brain, placenta, lung and kidney. In terms of tissue distribution, detected in heart and skeletal muscle.

It is found in the apical cell membrane. It localises to the cytoplasm. The protein resides in the membrane. The protein localises to the cytoskeleton. Its subcellular location is the microtubule organizing center. It is found in the centrosome. The catalysed reaction is 3',5'-cyclic AMP + H2O = AMP + H(+). It participates in purine metabolism; 3',5'-cyclic AMP degradation; AMP from 3',5'-cyclic AMP: step 1/1. Its activity is regulated as follows. Inhibited by rolipram. Activated by phosphatidic acid. Hydrolyzes the second messenger cAMP, which is a key regulator of many important physiological processes. The polypeptide is 3',5'-cyclic-AMP phosphodiesterase 4D (Homo sapiens (Human)).